A 478-amino-acid polypeptide reads, in one-letter code: ATP synthase subunit beta (478 aa).

164–171 is an ATP binding site; that stretch reads GGAGVGKT.

Belongs to the ATPase alpha/beta chains family. F-type ATPases have 2 components, CF(1) - the catalytic core - and CF(0) - the membrane proton channel. CF(1) has five subunits: alpha(3), beta(3), gamma(1), delta(1), epsilon(1). CF(0) has three main subunits: a(1), b(2) and c(9-12). The alpha and beta chains form an alternating ring which encloses part of the gamma chain. CF(1) is attached to CF(0) by a central stalk formed by the gamma and epsilon chains, while a peripheral stalk is formed by the delta and b chains.

The protein localises to the cell membrane. The enzyme catalyses ATP + H2O + 4 H(+)(in) = ADP + phosphate + 5 H(+)(out). Produces ATP from ADP in the presence of a proton gradient across the membrane. The catalytic sites are hosted primarily by the beta subunits. In Corynebacterium kroppenstedtii (strain DSM 44385 / JCM 11950 / CIP 105744 / CCUG 35717), this protein is ATP synthase subunit beta.